Consider the following 645-residue polypeptide: ATP-dependent zinc metalloprotease FtsH (645 aa).

Over 1–6 (MDQRPK) the chain is Cytoplasmic. Residues 7 to 27 (FGMILFYIVLGVFLMVALRGL) traverse the membrane as a helical segment. Residues 28 to 110 (YTTDTNLSVP…VVYEKGNDSL (83 aa)) are Periplasmic-facing. A helical membrane pass occupies residues 111–131 (FWVNLLGTIIPLAIIVFIWFF). The Cytoplasmic segment spans residues 132-645 (AMRSLSGRNS…AKEGNEDEKN (514 aa)). 204–211 (GPPGTGKT) contacts ATP. His-426 provides a ligand contact to Zn(2+). Glu-427 is a catalytic residue. Zn(2+) is bound by residues His-430 and Asp-503. The segment at 623–645 (SKRKVSAVSTNEEAKEGNEDEKN) is disordered. Positions 634–645 (EEAKEGNEDEKN) are enriched in basic and acidic residues.

The protein in the central section; belongs to the AAA ATPase family. It in the C-terminal section; belongs to the peptidase M41 family. In terms of assembly, homohexamer. Zn(2+) serves as cofactor.

It is found in the cell inner membrane. Functionally, acts as a processive, ATP-dependent zinc metallopeptidase for both cytoplasmic and membrane proteins. Plays a role in the quality control of integral membrane proteins. This Kosmotoga olearia (strain ATCC BAA-1733 / DSM 21960 / TBF 19.5.1) protein is ATP-dependent zinc metalloprotease FtsH.